A 304-amino-acid polypeptide reads, in one-letter code: Probable alpha-L-glutamate ligase 2 (304 aa).

The 184-residue stretch at 107-290 (HQLLARKGVG…IAGAIIDYIV (184 aa)) folds into the ATP-grasp domain. Residues lysine 144, 181-182 (EF), aspartate 190, and 214-216 (RSN) each bind ATP. Residues aspartate 251, glutamate 263, and asparagine 265 each coordinate Mg(2+). The Mn(2+) site is built by aspartate 251, glutamate 263, and asparagine 265.

It belongs to the RimK family. Requires Mg(2+) as cofactor. It depends on Mn(2+) as a cofactor.

The chain is Probable alpha-L-glutamate ligase 2 from Hahella chejuensis (strain KCTC 2396).